The following is an 80-amino-acid chain: Nuclear protein 1 (80 aa).

Disordered stretches follow at residues 1 to 21 and 38 to 80; these read MATLPPTANPSQQPLNLEDED and VGGG…KAWR. The segment covering 61–80 has biased composition (basic and acidic residues); that stretch reads GHERKLLTKFQNSERKKAWR. The short motif at 64-80 is the Nuclear localization signal element; the sequence is RKLLTKFQNSERKKAWR.

It belongs to the NUPR family. As to quaternary structure, monomer. Directly interacts with MSL1 and binds MORF4L1, two components of histone acetyltransferase complex; the interaction with MORF4L1 may be mediated by MSL1. Interacts with EP300; this interaction enhances the effect of EP300 on PAX2 transcription factor activity. Interacts with PAXIP1; this interaction prevents PAXIP1 inhibition of PAX2 transcription factor activity. Interacts with COPS5; this interaction allows COPS5-dependent CDKN1B nuclear to cytoplasm translocation. Interacts with RNF2. Interacts with FOXO3; this interaction represses FOXO3 transactivation. Interacts with PTMA; regulates apoptotic process. Interacts with MYOD1, EP300 and DDX5; this interaction coordinates the association of anti-proliferative and pro-myogenic proteins at the myogenin promoter. Interacts with TP53; interaction is stress-dependent. Forms a complex with EP300 and TP53; this complex binds CDKN1A promoter leading to transcriptional induction of CDKN1A. In terms of processing, phosphorylated. Phosphorylation promotes DNA-binding activity. Post-translationally, acetylated. Highly expressed in pancreas and both ovaries and testes.

It localises to the nucleus. Its subcellular location is the cytoplasm. It is found in the perinuclear region. In terms of biological role, transcription regulator that converts stress signals into a program of gene expression that empowers cells with resistance to the stress induced by a change in their microenvironment. Thereby participates in the regulation of many processes namely cell-cycle, apoptosis, autophagy and DNA repair responses. Controls cell cycle progression and protects cells from genotoxic stress induced by doxorubicin through the complex formation with TP53 and EP300 that binds CDKN1A promoter leading to transcriptional induction of CDKN1A. Protects pancreatic cancer cells from stress-induced cell death by binding the RELB promoter and activating its transcription, leading to IER3 transactivation. Negatively regulates apoptosis through interaction with PTMA. Inhibits autophagy-induced apoptosis in cardiac cells through FOXO3 interaction, inducing cytoplasmic translocation of FOXO3 thereby preventing the FOXO3 association with the pro-autophagic BNIP3 promoter. Inhibits cell growth and facilitates programmed cell death by apoptosis after adriamycin-induced DNA damage through transactivation of TP53. Regulates methamphetamine-induced apoptosis and autophagy through DDIT3-mediated endoplasmic reticulum stress pathway. Participates in DNA repair following gamma-irradiation by facilitating DNA access of the transcription machinery through interaction with MSL1 leading to inhibition of histone H4' Lys-16' acetylation (H4K16ac). Coactivator of PAX2 transcription factor activity, both by recruiting the EP300 cofactor to increase PAX2 transcription factor activity and by binding PAXIP1 to suppress PAXIP1-induced inhibition on PAX2. Positively regulates cell cycle progression through interaction with COPS5 inducing cytoplasmic translocation of CDKN1B leading to the CDKN1B degradation. Coordinates, through its interaction with EP300, the assiociation of MYOD1, EP300 and DDX5 to the MYOG promoter, leading to inhibition of cell-cycle progression and myogenic differentiation promotion. Negatively regulates beta cell proliferation via inhibition of cell-cycle regulatory genes expression through the suppression of their promoter activities. Also required for LHB expression and ovarian maturation. Exacerbates CNS inflammation and demyelination upon cuprizone treatment. The protein is Nuclear protein 1 of Mus musculus (Mouse).